The sequence spans 191 residues: Fe/S biogenesis protein NfuA (191 aa).

Positions 149 and 152 each coordinate [4Fe-4S] cluster.

The protein belongs to the NfuA family. As to quaternary structure, homodimer. [4Fe-4S] cluster is required as a cofactor.

Its function is as follows. Involved in iron-sulfur cluster biogenesis. Binds a 4Fe-4S cluster, can transfer this cluster to apoproteins, and thereby intervenes in the maturation of Fe/S proteins. Could also act as a scaffold/chaperone for damaged Fe/S proteins. The polypeptide is Fe/S biogenesis protein NfuA (Pseudoalteromonas translucida (strain TAC 125)).